A 326-amino-acid chain; its full sequence is MKTLIEQLPKAELHIHIEGSLEPELMFKLAQRNHQRLSFSSVEEAKQAYQFNDLQSFLNIYYQGANVLYGEEDFYDLTWNYLEKAKKQNICHTEIFFDPQTHTNRGVPFAAIITGITEALKAGKDQLGISSYLILCFLRDLTVESAFETLEQAIKYGEKIKAIGLDSAEKNNPPSKFKEVFDKARAEGFLTVAHAGEEGSSDYIWQAINLLKVSRIDHGIRCIDDPKLVEYLAEKQIPLTVCPLSNVKLKVFNCLEDHNLKILLDQGLCVTINSDDPAYFGGYLNENFLAISQALRLTEIDLQKMINNSFRASFLNTSEKEQLYIQ.

3 residues coordinate Zn(2+): H14, H16, and H194. E197 (proton donor) is an active-site residue. A Zn(2+)-binding site is contributed by D275. D276 provides a ligand contact to substrate.

The protein belongs to the metallo-dependent hydrolases superfamily. Adenosine and AMP deaminases family. Adenine deaminase type 2 subfamily. Zn(2+) serves as cofactor.

The catalysed reaction is adenine + H2O + H(+) = hypoxanthine + NH4(+). In terms of biological role, catalyzes the hydrolytic deamination of adenine to hypoxanthine. Plays an important role in the purine salvage pathway and in nitrogen catabolism. The sequence is that of Adenine deaminase from Crocosphaera subtropica (strain ATCC 51142 / BH68) (Cyanothece sp. (strain ATCC 51142)).